The primary structure comprises 243 residues: 1-(5-phosphoribosyl)-5-[(5-phosphoribosylamino)methylideneamino] imidazole-4-carboxamide isomerase (243 aa).

The Proton acceptor role is filled by aspartate 8. The Proton donor role is filled by aspartate 129.

It belongs to the HisA/HisF family.

It is found in the cytoplasm. It catalyses the reaction 1-(5-phospho-beta-D-ribosyl)-5-[(5-phospho-beta-D-ribosylamino)methylideneamino]imidazole-4-carboxamide = 5-[(5-phospho-1-deoxy-D-ribulos-1-ylimino)methylamino]-1-(5-phospho-beta-D-ribosyl)imidazole-4-carboxamide. It functions in the pathway amino-acid biosynthesis; L-histidine biosynthesis; L-histidine from 5-phospho-alpha-D-ribose 1-diphosphate: step 4/9. The chain is 1-(5-phosphoribosyl)-5-[(5-phosphoribosylamino)methylideneamino] imidazole-4-carboxamide isomerase from Syntrophotalea carbinolica (strain DSM 2380 / NBRC 103641 / GraBd1) (Pelobacter carbinolicus).